We begin with the raw amino-acid sequence, 117 residues long: MNAVPIILVFAAGLNSCIGNILLKWGRASLPPSAGLADTFLTPGFVGGVVFYGINVLLFAKALDSLEVSVAYPILAGSGFAMLIIASHYFFGEPFHLHKWIGVALVLVGIIFLARGG.

Helical transmembrane passes span 3–23 (AVPIILVFAAGLNSCIGNILL), 40–60 (FLTPGFVGGVVFYGINVLLFA), 66–86 (LEVSVAYPILAGSGFAMLIIA), and 94–114 (PFHLHKWIGVALVLVGIIFLA).

The protein to E.coli and S.aureus ethidium bromide resistance proteins (ebr/QacC/EmrE/MvrC).

The protein localises to the cell membrane. This is an uncharacterized protein from Sinorhizobium fredii (strain NBRC 101917 / NGR234).